Consider the following 529-residue polypeptide: ADP,ATP carrier protein 1 (529 aa).

Helical transmembrane passes span 24 to 44 (LKKVLPMFLMFFCISFNYTIL), 63 to 83 (IPFIKLWLVVPSAVVFMLIYA), 93 to 113 (ALFYAVLSPFVVFFALFPLVI), 124 to 144 (DFADTLQAILPSGFLGFIAML), 149 to 169 (FAAFYVLSELWGSVMLSLMFW), 184 to 204 (FYALFGVGANVALLISGPAIV), 220 to 240 (WGVTLYFLMAMFLCSCAIIAA), 284 to 304 (YMLLLALLVICYGVCINLVEV), 322 to 342 (AFMGTFSFWTGVVSVFVMLFI), 356 to 376 (ALVTPVMVLVTGAIFFALVIF), 381 to 401 (TGLVAALGTTPLMLAVVVGAV), and 463 to 483 (ISAMTPFLAVALFAIIMVWLT). Low complexity predominate over residues 509–520 (AAEKEASPAAKE). The segment at 509–529 (AAEKEASPAAKEVSPAIEGVS) is disordered.

Belongs to the ADP/ATP translocase tlc family.

Its subcellular location is the cell membrane. This is ADP,ATP carrier protein 1 (tlcA) from Chlamydia muridarum (strain MoPn / Nigg).